The sequence spans 502 residues: uncharacterized protein (502 aa).

Low complexity-rich tracts occupy residues 1–10 (MQSTTNNNTN), 28–47 (SNRS…NNLS), and 155–171 (NTED…SVNS). 4 disordered regions span residues 1-57 (MQST…VISY), 155-181 (NTED…LSAR), 212-362 (SLGN…TDKF), and 438-487 (TIDQ…TSNL). A compositionally biased stretch (polar residues) spans 212–230 (SLGNSERNSPDRPSTQGDS). Composition is skewed to low complexity over residues 242–290 (RNAS…SSRN) and 309–327 (SNKN…TSIK). Residues 339–348 (QTNKSKNQRG) are compositionally biased toward polar residues. The span at 446–460 (TSDKNNSTKSNTKYN) shows a compositional bias: low complexity. The span at 470–487 (SYGTSKRSHNRSSNTSNL) shows a compositional bias: polar residues.

Its subcellular location is the virion. This is an uncharacterized protein from Acanthamoeba polyphaga (Amoeba).